A 66-amino-acid polypeptide reads, in one-letter code: Rho-elapitoxin-Da1b (66 aa).

4 cysteine pairs are disulfide-bonded: Cys-3–Cys-24, Cys-17–Cys-42, Cys-46–Cys-58, and Cys-59–Cys-64.

Belongs to the three-finger toxin family. Short-chain subfamily. Aminergic toxin sub-subfamily. As to expression, expressed by the venom gland.

The protein resides in the secreted. Non-competitive antagonist of alpha-2 adrenergic receptors (ADRA2) in smooth muscles, and partial antagonist of D3 dopamine receptors (DRD3) (inhibits 25% of methylspiperone binding to this receptor). Also shows a low antagonism on D2 dopamine receptors (DRD2) (short isoform). Shows high affinity to adrenergic receptors (Ki=14 nM (ADRA2A), Ki=73 nM (ADRA2B), and Ki=38 nM (ADRA2C)). Increases heart rate and blood catecholamine concentrations. The chain is Rho-elapitoxin-Da1b from Dendroaspis angusticeps (Eastern green mamba).